We begin with the raw amino-acid sequence, 127 residues long: Large ribosomal subunit protein eL32 (127 aa).

Residues 37-48 (KWRKPKGTDSKM) show a composition bias toward basic and acidic residues. The disordered stretch occupies residues 37–65 (KWRKPKGTDSKMRVKLKGKARSPSIGWSS).

Belongs to the eukaryotic ribosomal protein eL32 family.

The chain is Large ribosomal subunit protein eL32 from Thermococcus sibiricus (strain DSM 12597 / MM 739).